Reading from the N-terminus, the 667-residue chain is Leucine aminopeptidase 2 (667 aa).

A peptide is bound by residues 188 to 190 (QCQ) and 318 to 323 (PYGGME). Residue H347 participates in Zn(2+) binding. Residue E348 is the Proton acceptor of the active site. Residues H351 and E370 each coordinate Zn(2+). The active-site Proton donor is the Y436.

It belongs to the peptidase M1 family. Zn(2+) serves as cofactor.

The protein resides in the cytoplasm. It localises to the nucleus. The enzyme catalyses an epoxide + H2O = an ethanediol. In terms of biological role, aminopeptidase that preferentially cleaves di- and tripeptides. Also has low epoxide hydrolase activity (in vitro). Can hydrolyze the epoxide leukotriene LTA(4) but it forms preferentially 5,6-dihydroxy-7,9,11,14-eicosatetraenoic acid rather than the cytokine leukotriene B(4) as the product compared to the homologous mammalian enzyme (in vitro). This Neurospora crassa (strain ATCC 24698 / 74-OR23-1A / CBS 708.71 / DSM 1257 / FGSC 987) protein is Leucine aminopeptidase 2 (ara-1).